Reading from the N-terminus, the 300-residue chain is Protein N-terminal and lysine N-methyltransferase EFM7 (300 aa).

S-adenosyl-L-methionine-binding positions include Trp-75, 101–103, Asp-123, Trp-156, and Ser-179; that span reads GAG.

The protein belongs to the class I-like SAM-binding methyltransferase superfamily. EFM7 family.

Its subcellular location is the cytoplasm. In terms of biological role, S-adenosyl-L-methionine-dependent protein methyltransferase that trimethylates the N-terminal glycine 'Gly-2' of elongation factor 1-alpha, before also catalyzing the mono- and dimethylation of 'Lys-3'. The polypeptide is Protein N-terminal and lysine N-methyltransferase EFM7 (Cryptococcus neoformans var. neoformans serotype D (strain JEC21 / ATCC MYA-565) (Filobasidiella neoformans)).